The sequence spans 317 residues: Testis-expressed protein 19.2 (317 aa).

The span at 64–75 shows a compositional bias: acidic residues; sequence MELSEASSEPEE. Positions 64–113 are disordered; sequence MELSEASSEPEEWPGLSGGEGQGHLPHGISVSAGSGAQGPQPVPTELGPQ. Positions 101-145 are important for interaction with piRNA; that stretch reads QGPQPVPTELGPQEAVPLDLGPEDAEWTQALPWRFDGLSPCSHWL.

Interacts with UBR2. Interacts with piRNA-associated proteins DDX4, EDC4, MAEL, PIWIL1, PIWIL2, RANBP9 and TDRD6. Specifically expressed in somatic cells of male gonad lineage.

The protein resides in the cytoplasm. Functionally, may be required during spermatogenesis, probably by participating in the repression of retrotransposable elements and prevent their mobilization. With its paralog, Tex19.1, collaborates with the Piwi-interacting RNA (piRNA) pathway, which mediates the repression of transposable elements during meiosis by forming complexes composed of piRNAs and Piwi proteins. Interacts with Piwi proteins and directly binds piRNAs, a class of 24 to 30 nucleotide RNAs that are generated by a Dicer-independent mechanism and are primarily derived from transposons and other repeated sequence elements. The polypeptide is Testis-expressed protein 19.2 (Tex19.2) (Mus musculus (Mouse)).